A 541-amino-acid chain; its full sequence is Glucans biosynthesis protein D (541 aa).

A signal peptide (tat-type signal) is located at residues 1–29 (MHRRNLLKASMAIAAYTGLSASGLLAAQA).

Belongs to the OpgD/OpgG family. Predicted to be exported by the Tat system. The position of the signal peptide cleavage has not been experimentally proven.

It localises to the periplasm. It functions in the pathway glycan metabolism; osmoregulated periplasmic glucan (OPG) biosynthesis. Functionally, probably involved in the control of the structural glucose backbone of osmoregulated periplasmic glucans (OPGs). The chain is Glucans biosynthesis protein D from Pseudomonas fluorescens (strain SBW25).